The primary structure comprises 390 residues: Acid protease (390 aa).

An N-terminal signal peptide occupies residues 1 to 18 (MLFSKSLLLSVLASLSFA). Positions 75–386 (YLTTIEIGTP…DIDNSQVGIA (312 aa)) constitute a Peptidase A1 domain. Active-site residues include Asp93 and Asp282.

It belongs to the peptidase A1 family.

The protein is Acid protease (PEP1) of Saccharomycopsis fibuligera (Yeast).